The chain runs to 143 residues: Holo-[acyl-carrier-protein] synthase (143 aa).

2 residues coordinate Mg(2+): Asp-9 and Glu-63.

The protein belongs to the P-Pant transferase superfamily. AcpS family. It depends on Mg(2+) as a cofactor.

The protein resides in the cytoplasm. The catalysed reaction is apo-[ACP] + CoA = holo-[ACP] + adenosine 3',5'-bisphosphate + H(+). Functionally, transfers the 4'-phosphopantetheine moiety from coenzyme A to a Ser of acyl-carrier-protein. The sequence is that of Holo-[acyl-carrier-protein] synthase from Burkholderia pseudomallei (strain 668).